Reading from the N-terminus, the 624-residue chain is (-)-beta-phellandrene synthase 4, chloroplastic (624 aa).

Residues 1–48 (MAIVSSVPLASKSCLHKSLISSIHKLKPFCRTIPTLGMSRPGKSVMPS) constitute a chloroplast transit peptide. Residues 41–60 (PGKSVMPSMSMSSPVSDDGV) form a disordered region. A compositionally biased stretch (low complexity) spans 44–56 (SVMPSMSMSSPVS). The Mg(2+) site is built by Asp-375, Asp-379, and Asp-527. The DDXXD motif signature appears at 375–379 (DDMYD).

Belongs to the terpene synthase family. Tpsd subfamily. Mg(2+) is required as a cofactor. Requires Mn(2+) as cofactor.

It is found in the plastid. It localises to the chloroplast. The enzyme catalyses (2E)-geranyl diphosphate = (-)-beta-phellandrene + diphosphate. Its pathway is terpene metabolism; oleoresin biosynthesis. Its function is as follows. Terpene synthase (TPS) involved in the biosynthesis of monoterpene natural products included in conifer oleoresin secretions and volatile emissions; these compounds contribute to biotic and abiotic stress defense against herbivores and pathogens. Catalyzes the conversion of (2E)-geranyl diphosphate (GPP) to (-)-beta-phellandrene. This Picea sitchensis (Sitka spruce) protein is (-)-beta-phellandrene synthase 4, chloroplastic.